A 386-amino-acid chain; its full sequence is Arginine biosynthesis bifunctional protein ArgJ (386 aa).

Substrate is bound by residues T148, K170, T181, E261, N381, and S386. T181 (nucleophile) is an active-site residue.

This sequence belongs to the ArgJ family. In terms of assembly, heterotetramer of two alpha and two beta chains.

The protein resides in the cytoplasm. It catalyses the reaction N(2)-acetyl-L-ornithine + L-glutamate = N-acetyl-L-glutamate + L-ornithine. It carries out the reaction L-glutamate + acetyl-CoA = N-acetyl-L-glutamate + CoA + H(+). It participates in amino-acid biosynthesis; L-arginine biosynthesis; L-ornithine and N-acetyl-L-glutamate from L-glutamate and N(2)-acetyl-L-ornithine (cyclic): step 1/1. Its pathway is amino-acid biosynthesis; L-arginine biosynthesis; N(2)-acetyl-L-ornithine from L-glutamate: step 1/4. Catalyzes two activities which are involved in the cyclic version of arginine biosynthesis: the synthesis of N-acetylglutamate from glutamate and acetyl-CoA as the acetyl donor, and of ornithine by transacetylation between N(2)-acetylornithine and glutamate. This Corynebacterium diphtheriae (strain ATCC 700971 / NCTC 13129 / Biotype gravis) protein is Arginine biosynthesis bifunctional protein ArgJ.